The chain runs to 2327 residues: Nonribosomal peptide synthetase apmB (2327 aa).

Positions 214–605 (DTQAKSRPDS…GRKDMQIKLR (392 aa)) are adenylation 1. The region spanning 734-810 (EPATATGKVL…EMADACTKVI (77 aa)) is the Carrier 1 domain. Position 771 is an O-(pantetheine 4'-phosphoryl)serine (Ser771). The condensation 1 stretch occupies residues 845–1259 (EDLYPCTAMQ…IFISSKDQES (415 aa)). Residues 1281-1675 (ERIAERPDHE…RRKDTQVKLR (395 aa)) are adenylation 2. The Carrier 2 domain maps to 1816–1892 (PPTTDMQITM…AISAVAETLS (77 aa)). Residue Ser1853 is modified to O-(pantetheine 4'-phosphoryl)serine. The tract at residues 1937 to 2260 (TDFQSLAING…VFQYQDFGGE (324 aa)) is condensation 2. Residues 2299–2327 (RVDLPRRPSPAGDTRDGPTAASDSPSRAR) are disordered.

This sequence belongs to the NRP synthetase family.

The catalysed reaction is N-benzoyl-L-phenylalaninol + benzoate + L-phenylalanine + 2 ATP = asperphenamate + 2 AMP + 2 diphosphate + H(+). Its pathway is secondary metabolite biosynthesis. In terms of biological role, nonribosomal peptide synthetase; part of the gene cluster that mediates the biosynthesis of asperphenamate, a rare linear amino acid ester that exhibits antitumor activity towards a number of cell lines. The structure of asperphenamate contains two subunits, N-benzoylphenylalanine and N-benzoylphenylalaninol, which are connected by an inter-molecular ester bond. The first step of asperphenamate biosynthesis is the generation of N-benzoylphenylalaninol by the nonribosomal peptide synthase apmA. Using phenylalanine and benzoic acid as substrates, apmA catalyzes amide bond formation and tethers the intermediate into the NRPS chain. Then, the terminal R domain of apmA catalyzes the reduction reaction to get the shunt product N-benzoylphenylalaninol. Subsequently, the nonribosomal peptide synthase apmB activates the same substrates as does apmA (phenylalanine and benzoic acid) to produce N-benzoylphenylalanine before condensing N-benzoylphenylalanine and N-benzoylphenylalaninol to release asperphenamate. This chain is Nonribosomal peptide synthetase apmB, found in Penicillium brevicompactum.